A 621-amino-acid chain; its full sequence is Chaperone protein HtpG (621 aa).

The tract at residues 1–328 (MKQEKKKFDA…SEDLPLNISR (328 aa)) is a; substrate-binding. The tract at residues 329 to 544 (ESLQHNNVLE…EAAMDIRMER (216 aa)) is b. The disordered stretch occupies residues 478-498 (DVDQATSSSEEKNKDDKKSDD). Positions 486–498 (SEEKNKDDKKSDD) are enriched in basic and acidic residues. The segment at 545–621 (FLIEQKQIAN…LNDIVQKAIL (77 aa)) is c.

This sequence belongs to the heat shock protein 90 family. Homodimer.

It is found in the cytoplasm. Its function is as follows. Molecular chaperone. Has ATPase activity. The protein is Chaperone protein HtpG of Rickettsia bellii (strain RML369-C).